The primary structure comprises 75 residues: Holin (75 aa).

A run of 2 helical transmembrane segments spans residues 16 to 36 (FAQAMIGALGAGATGLIGVDW) and 39 to 59 (ALSIAGFATVVSILTSLASGI).

As to quaternary structure, homomultimer.

The protein resides in the host cell inner membrane. Functionally, accumulates harmlessly in the cytoplasmic membrane until it reaches a critical concentration that triggers the formation of micron-scale pores (holes) causing host cell membrane disruption and endolysin escape into the periplasmic space. Determines the precise timing of host cell lysis. Participates with the endolysin protein in the sequential events which lead to the programmed host cell lysis releasing the mature viral particles from the host cell. The polypeptide is Holin (Lactococcus lactis subsp. cremoris (Streptococcus cremoris)).